We begin with the raw amino-acid sequence, 179 residues long: UPF0227 protein Shewmr4_1727 (179 aa).

The protein belongs to the UPF0227 family.

The protein is UPF0227 protein Shewmr4_1727 of Shewanella sp. (strain MR-4).